Consider the following 442-residue polypeptide: 3-phosphoshikimate 1-carboxyvinyltransferase (442 aa).

Residues lysine 25, serine 26, and arginine 30 each contribute to the 3-phosphoshikimate site. Lysine 25 is a binding site for phosphoenolpyruvate. 2 residues coordinate phosphoenolpyruvate: glycine 96 and arginine 124. 3-phosphoshikimate contacts are provided by serine 171, serine 172, glutamine 173, serine 203, aspartate 325, and lysine 352. Glutamine 173 is a phosphoenolpyruvate binding site. The active-site Proton acceptor is the aspartate 325. Residues arginine 356, arginine 400, and lysine 425 each coordinate phosphoenolpyruvate.

The protein belongs to the EPSP synthase family. In terms of assembly, monomer.

Its subcellular location is the cytoplasm. It carries out the reaction 3-phosphoshikimate + phosphoenolpyruvate = 5-O-(1-carboxyvinyl)-3-phosphoshikimate + phosphate. It functions in the pathway metabolic intermediate biosynthesis; chorismate biosynthesis; chorismate from D-erythrose 4-phosphate and phosphoenolpyruvate: step 6/7. Functionally, catalyzes the transfer of the enolpyruvyl moiety of phosphoenolpyruvate (PEP) to the 5-hydroxyl of shikimate-3-phosphate (S3P) to produce enolpyruvyl shikimate-3-phosphate and inorganic phosphate. The protein is 3-phosphoshikimate 1-carboxyvinyltransferase of Bordetella parapertussis (strain 12822 / ATCC BAA-587 / NCTC 13253).